A 717-amino-acid polypeptide reads, in one-letter code: Coupling protein TraD (717 aa).

At 1 to 27 (MSFNAKDMTQGGQIASMRIRMFSQIAN) the chain is on the cytoplasmic side. Residues 28 to 47 (IMLYCLFIFFWILVGLVLWI) traverse the membrane as a helical segment. Residues 48 to 104 (KISWQTFVNGCIYWWCTTLEGMRDLIKSQPVYEIQYYGKTFRMNAAQVLHDKYMIWC) are Periplasmic-facing. The helical transmembrane segment at 105 to 130 (SEQLWSAFVLAAVVALVICLITFFVV) threads the bilayer. The Cytoplasmic segment spans residues 131 to 717 (SWILGRQGKQ…GEDVEPGDDF (587 aa)). An ATP-binding site is contributed by 192-199 (GTVGAGKS). Disordered stretches follow at residues 614-639 (EDVT…DSGV) and 650-669 (LKMK…ISES).

This sequence belongs to the TrwB coupling protein family. Interacts with relaxosome component TraM. May form a hexamer in the membrane.

It localises to the cell inner membrane. Its function is as follows. Conjugative DNA transfer (CDT) is the unidirectional transfer of ssDNA plasmid from a donor to a recipient cell. It is the central mechanism by which antibiotic resistance and virulence factors are propagated in bacterial populations. Couples the transferosome to a type IV secretion system. Probably forms a pore through which single-stranded plasmid DNA is transferred to the secretion system. The last 37 residues are important for determining plasmid specificity and transfer efficiency, with additional specificity conferred by the TraD-TraM pair. This chain is Coupling protein TraD (traD), found in Escherichia coli (strain K12).